The chain runs to 216 residues: Small ribosomal subunit protein uS5 (216 aa).

The S5 DRBM domain maps to 51-114; that stretch reads LEEEVIDVNL…DDAKFNIIKV (64 aa).

Belongs to the universal ribosomal protein uS5 family. As to quaternary structure, part of the 30S ribosomal subunit. Contacts protein S4.

Its function is as follows. With S4 and S12 plays an important role in translational accuracy. The chain is Small ribosomal subunit protein uS5 from Methanothermobacter thermautotrophicus (strain ATCC 29096 / DSM 1053 / JCM 10044 / NBRC 100330 / Delta H) (Methanobacterium thermoautotrophicum).